The sequence spans 324 residues: IDS-like terpene synthase 3 (324 aa).

Mg(2+) contacts are provided by Asp-77 and Asp-81.

It belongs to the FPP/GGPP synthase family. Mg(2+) serves as cofactor.

The enzyme catalyses (2E)-geranyl diphosphate + H2O = linalool + diphosphate. It catalyses the reaction (2E,6E)-farnesyl diphosphate + H2O = (6E)-nerolidol + diphosphate. Its function is as follows. Terpene synthase that shows monoterpene synthase activity and produces linalool, using geranyl diphosphate (GPP) as substrate. Also shows sesquiterpene synthase activity as it is able to convert farnesyl diphosphate (FPP) into (E)-nerolidol. In Melampsora lini (Rust fungus), this protein is IDS-like terpene synthase 3.